The primary structure comprises 668 residues: Small ribosomal subunit protein mS81 (rPPR8) (668 aa).

The transit peptide at 1-36 (MRYQQWRLMLLRSYHRSHLPYLSPCSQVTSISSRSF) directs the protein to the mitochondrion. 7 PPR repeats span residues 286-320 (DEKT…GYEV), 321-355 (EIET…SSSS), 396-430 (TDSL…GYVP), 431-465 (SGDM…GNNL), 466-496 (DDKA…MVGN), 502-537 (ADYS…QLKP), and 543-577 (KSLV…GFPP).

Belongs to the PPR family. P subfamily. Component of the mitochondrial ribosome small subunit.

The protein resides in the mitochondrion. This Arabidopsis thaliana (Mouse-ear cress) protein is Small ribosomal subunit protein mS81 (rPPR8).